The chain runs to 1524 residues: DNA polymerase alpha catalytic subunit (1524 aa).

2 disordered regions span residues methionine 1–isoleucine 53 and arginine 68–proline 139. Positions serine 20 to lysine 30 are enriched in basic and acidic residues. The segment covering glutamate 79 to aspartate 96 has biased composition (acidic residues). The Zn(2+) site is built by cysteine 1333, cysteine 1336, cysteine 1375, cysteine 1378, cysteine 1414, cysteine 1419, cysteine 1440, and cysteine 1446. The CysA-type zinc-finger motif lies at cysteine 1333–cysteine 1378. The CysB motif signature appears at cysteine 1414–cysteine 1446.

This sequence belongs to the DNA polymerase type-B family.

It is found in the nucleus. It carries out the reaction DNA(n) + a 2'-deoxyribonucleoside 5'-triphosphate = DNA(n+1) + diphosphate. In terms of biological role, polymerase alpha in a complex with DNA primase is a replicative polymerase. This Arabidopsis thaliana (Mouse-ear cress) protein is DNA polymerase alpha catalytic subunit (POLA).